The following is a 190-amino-acid chain: Interferon alpha-9 (190 aa).

The N-terminal stretch at 1 to 23 (MARPFAFLMVLVVISYWSTCSLG) is a signal peptide. 2 disulfides stabilise this stretch: C24–C122 and C52–C162. A glycan (N-linked (GlcNAc...) asparagine) is linked at N101.

It belongs to the alpha/beta interferon family.

The protein localises to the secreted. Functionally, produced by macrophages, IFN-alpha have antiviral activities. Interferon stimulates the production of two enzymes: a protein kinase and an oligoadenylate synthetase. This chain is Interferon alpha-9 (Ifna9), found in Mus musculus (Mouse).